The following is a 585-amino-acid chain: Switch-associated protein 70 (585 aa).

In terms of domain architecture, PH spans 210 to 306 (DVLKQGYMMK…WIQAIYSTIH (97 aa)). A coiled-coil region spans residues 316-529 (HKEARQRRKE…VKKKLEMATH (214 aa)). A disordered region spans residues 347 to 373 (ANENKQQELESVRKKLEEAASRAADEE). The segment covering 351–373 (KQQELESVRKKLEEAASRAADEE) has biased composition (basic and acidic residues).

In terms of assembly, the SWAP complex consists of NPM1, NCL, PARP1 and SWAP70. Post-translationally, tyrosine-phosphorylated. In terms of tissue distribution, spleen. Expressed only in B-cells that have been induced to switch to various Ig isotypes.

Its subcellular location is the cytoplasm. The protein localises to the cell membrane. The protein resides in the nucleus. It is found in the cell projection. It localises to the lamellipodium. Its subcellular location is the cytoskeleton. In terms of biological role, phosphatidylinositol 3,4,5-trisphosphate-dependent guanine nucleotide exchange factor (GEF) which, independently of RAS, transduces signals from tyrosine kinase receptors to RAC. It also mediates signaling of membrane ruffling. Regulates the actin cytoskeleton as an effector or adapter protein in response to agonist stimulated phosphatidylinositol (3,4)-bisphosphate production and cell protrusion. In Mus musculus (Mouse), this protein is Switch-associated protein 70 (Swap70).